Consider the following 429-residue polypeptide: Enolase (429 aa).

Gln-169 contributes to the (2R)-2-phosphoglycerate binding site. Catalysis depends on Glu-211, which acts as the Proton donor. Mg(2+)-binding residues include Asp-248, Glu-289, and Asp-316. Residues Lys-341, Arg-370, Ser-371, and Lys-392 each coordinate (2R)-2-phosphoglycerate. The active-site Proton acceptor is Lys-341.

The protein belongs to the enolase family. Requires Mg(2+) as cofactor.

It is found in the cytoplasm. Its subcellular location is the secreted. It localises to the cell surface. The enzyme catalyses (2R)-2-phosphoglycerate = phosphoenolpyruvate + H2O. The protein operates within carbohydrate degradation; glycolysis; pyruvate from D-glyceraldehyde 3-phosphate: step 4/5. Functionally, catalyzes the reversible conversion of 2-phosphoglycerate (2-PG) into phosphoenolpyruvate (PEP). It is essential for the degradation of carbohydrates via glycolysis. The protein is Enolase of Anaplasma phagocytophilum (strain HZ).